A 2193-amino-acid chain; its full sequence is Genome polyprotein (2193 aa).

The interval 1-22 (MGSQVSTQRSGSHENSNSATEG) is disordered. Gly2 carries N-myristoyl glycine; by host lipidation. Residues 2 to 1503 (GSQVSTQRSG…HLNRAVLVMQ (1502 aa)) are Cytoplasmic-facing. Residues 568-588 (RVADVIESSIGDSVSRALTQA) are amphipathic alpha-helix. Active-site for protease 2A activity residues include His883 and Asp901. Zn(2+) contacts are provided by Cys918 and Cys920. The For protease 2A activity role is filled by Cys972. Residues Cys978 and His980 each contribute to the Zn(2+) site. Residues 1216–1374 (EKRMNNYMQF…SKTDLGRLDA (159 aa)) form the SF3 helicase domain. 1240-1247 (GSPGTGKS) is an ATP binding site. Zn(2+)-binding residues include Cys1381, Cys1392, and Cys1397. Residues 1381 to 1397 (CSENNTANFKRCSPLVC) form a C4-type; degenerate zinc finger. The stretch at 1504–1519 (SIATVVAVVSLVYVIY) is an intramembrane region. Over 1520–2193 (KLFAGFQGAY…NLRRNWLELF (674 aa)) the chain is Cytoplasmic. Position 1529 is an O-(5'-phospho-RNA)-tyrosine (Tyr1529). Residues 1549–1727 (GPSLDFALSL…FCAGLKRSYF (179 aa)) form the Peptidase C3 domain. Active-site for protease 3C activity residues include His1588, Glu1619, and Cys1695. Positions 1958–2073 (GSLFAFDYSG…ASYPFPIDCL (116 aa)) constitute a RdRp catalytic domain. 2 residues coordinate Mg(2+): Asp1964 and Asp2060.

The protein belongs to the picornaviruses polyprotein family. Interacts with capsid protein VP1 and capsid protein VP3 to form heterotrimeric protomers. In terms of assembly, interacts with capsid protein VP0, and capsid protein VP3 to form heterotrimeric protomers. Five protomers subsequently associate to form pentamers which serve as building blocks for the capsid. Interacts with capsid protein VP2, capsid protein VP3 and capsid protein VP4 following cleavage of capsid protein VP0. Interacts with host SCARB2. Interacts with host ARF6; this interaction mediates viral endocytosis. As to quaternary structure, interacts with capsid protein VP1 and capsid protein VP3 in the mature capsid. Interacts with host SCARB2. Interacts with capsid protein VP0 and capsid protein VP1 to form heterotrimeric protomers. Five protomers subsequently associate to form pentamers which serve as building blocks for the capsid. Interacts with capsid protein VP4 in the mature capsid. Interacts with protein 2C; this interaction may be important for virion morphogenesis. In terms of assembly, interacts with capsid protein VP1 and capsid protein VP3. As to quaternary structure, homodimer. Interacts with host BAX; this interaction activates the mitochondrial apoptotic pathway. Interacts with host ILF2. In terms of assembly, homohexamer; forms a hexameric ring structure with 6-fold symmetry characteristic of AAA+ ATPases. Interacts (via N-terminus) with host RTN3 (via reticulon domain); this interaction is important for viral replication. Interacts with capsid protein VP3; this interaction may be important for virion morphogenesis. As to quaternary structure, interacts with protein 3CD. Homodimer. Interacts with host GBF1. Interacts (via GOLD domain) with host ACBD3 (via GOLD domain); this interaction allows the formation of a viral protein 3A/ACBD3 heterotetramer with a 2:2 stoichiometry, which will stimulate the recruitment of host PI4KB in order to synthesize PI4P at the viral RNA replication sites. In terms of assembly, interacts with RNA-directed RNA polymerase. As to quaternary structure, interacts with host IFIH1/MDA5; this interaction inhibits host IFIH1. Interacts with protein 3AB and with RNA-directed RNA polymerase. In terms of assembly, interacts with Viral protein genome-linked and with protein 3CD. Requires Mg(2+) as cofactor. In terms of processing, specific enzymatic cleavages in vivo by the viral proteases yield processing intermediates and the mature proteins. Post-translationally, myristoylation is required for the formation of pentamers during virus assembly. Further assembly of 12 pentamers and a molecule of genomic RNA generates the provirion. During virion maturation, immature virions are rendered infectious following cleavage of VP0 into VP4 and VP2. This maturation seems to be an autocatalytic event triggered by the presence of RNA in the capsid and it is followed by a conformational change infectious virion. In terms of processing, myristoylation is required during RNA encapsidation and formation of the mature virus particle. Post-translationally, VPg is uridylylated by the polymerase into VPg-pUpU. This acts as a nucleotide-peptide primer for the genomic RNA replication.

It is found in the virion. The protein resides in the host cytoplasm. Its subcellular location is the host cytoplasmic vesicle membrane. The protein localises to the host nucleus. It carries out the reaction a ribonucleoside 5'-triphosphate + H2O = a ribonucleoside 5'-diphosphate + phosphate + H(+). It catalyses the reaction Selective cleavage of Tyr-|-Gly bond in the picornavirus polyprotein.. The catalysed reaction is RNA(n) + a ribonucleoside 5'-triphosphate = RNA(n+1) + diphosphate. The enzyme catalyses Selective cleavage of Gln-|-Gly bond in the poliovirus polyprotein. In other picornavirus reactions Glu may be substituted for Gln, and Ser or Thr for Gly.. Its activity is regulated as follows. Replication or transcription is subject to high level of random mutations by the nucleotide analog ribavirin. Functionally, forms an icosahedral capsid of pseudo T=3 symmetry with capsid proteins VP2 and VP3. The capsid is 300 Angstroms in diameter, composed of 60 copies of each capsid protein and enclosing the viral positive strand RNA genome. Capsid protein VP1 mainly forms the vertices of the capsid. Capsid protein VP1, together with VP2, interacts with host cell receptor SCARB2 to provide virion attachment to target host cells. This attachment induces virion internalization. After binding to its receptor, the capsid undergoes conformational changes. Capsid protein VP1 N-terminus (that contains an amphipathic alpha-helix) and capsid protein VP4 are externalized. Together, they shape a pore in the host membrane through which viral genome is translocated to host cell cytoplasm. Its function is as follows. Forms an icosahedral capsid of pseudo T=3 symmetry with capsid proteins VP2 and VP3. The capsid is 300 Angstroms in diameter, composed of 60 copies of each capsid protein and enclosing the viral positive strand RNA genome. Capsid protein VP2, together with VP1, interacts with host cell receptor SCARB2 to provide virion attachment to target host cells. In terms of biological role, forms an icosahedral capsid of pseudo T=3 symmetry with capsid proteins VP2 and VP3. The capsid is 300 Angstroms in diameter, composed of 60 copies of each capsid protein and enclosing the viral positive strand RNA genome. Lies on the inner surface of the capsid shell. After binding to the host receptor, the capsid undergoes conformational changes. Capsid protein VP4 is released, Capsid protein VP1 N-terminus is externalized, and together, they shape a pore in the host membrane through which the viral genome is translocated into the host cell cytoplasm. Functionally, component of immature procapsids, which is cleaved into capsid proteins VP4 and VP2 after maturation. Allows the capsid to remain inactive before the maturation step. Its function is as follows. Cysteine protease that cleaves viral polyprotein and specific host proteins. It is responsible for the autocatalytic cleavage between the P1 and P2 regions, which is the first cleavage occurring in the polyprotein. Also cleaves the host translation initiation factor EIF4G1, in order to shut down the capped cellular mRNA translation. Inhibits the host nucleus-cytoplasm protein and RNA trafficking by cleaving host members of the nuclear pores. Counteracts stress granule formation probably by antagonizing its assembly or promoting its dissassembly. Cleaves and inhibits host IFIH1/MDA5, thereby inhibiting the type-I IFN production and the establishment of the antiviral state. Cleaves and inhibits host MAVS, thereby inhibiting the type-I IFN production and the establishment of the antiviral state. In terms of biological role, plays an essential role in the virus replication cycle by acting as a viroporin. Creates a pore in the host endoplasmic reticulum and as a consequence releases Ca2+ in the cytoplasm of infected cell. In turn, high levels of cytoplasmic calcium may trigger membrane trafficking and transport of viral ER-associated proteins to viroplasms, sites of viral genome replication. Induces and associates with structural rearrangements of intracellular membranes. Displays RNA-binding, nucleotide binding and NTPase activities. May play a role in virion morphogenesis and viral RNA encapsidation by interacting with the capsid protein VP3. Functionally, localizes the viral replication complex to the surface of membranous vesicles. Together with protein 3CD binds the Cis-Active RNA Element (CRE) which is involved in RNA synthesis initiation. Acts as a cofactor to stimulate the activity of 3D polymerase, maybe through a nucleid acid chaperone activity. Its function is as follows. Localizes the viral replication complex to the surface of membranous vesicles. It inhibits host cell endoplasmic reticulum-to-Golgi apparatus transport and causes the disassembly of the Golgi complex, possibly through GBF1 interaction. This would result in depletion of MHC, trail receptors and IFN receptors at the host cell surface. Plays an essential role in viral RNA replication by recruiting ACBD3 and PI4KB at the viral replication sites, thereby allowing the formation of the rearranged membranous structures where viral replication takes place. In terms of biological role, acts as a primer for viral RNA replication and remains covalently bound to viral genomic RNA. VPg is uridylylated prior to priming replication into VPg-pUpU. The oriI viral genomic sequence may act as a template for this. The VPg-pUpU is then used as primer on the genomic RNA poly(A) by the RNA-dependent RNA polymerase to replicate the viral genome. During genome replication, the VPg-RNA linkage is removed by the host TDP2, thereby accelerating replication. During the late stage of the replication cycle, host TDP2 is excluded from sites of viral RNA synthesis and encapsidation, allowing for the generation of progeny virions. Involved in the viral replication complex and viral polypeptide maturation. It exhibits protease activity with a specificity and catalytic efficiency that is different from protease 3C. Protein 3CD lacks polymerase activity. Protein 3CD binds to the 5'UTR of the viral genome. Functionally, major viral protease that mediates proteolytic processing of the polyprotein. Cleaves host EIF5B, contributing to host translation shutoff. Also cleaves host PABPC1, contributing to host translation shutoff. Disassembles host cytoplasmic stress granules by cleaving host G3BP1, although this effect is less prononced than the inhibition induced by protease 2A. Cleaves host RIGI and thus contributes to the inhibition of type I interferon production. Cleaves host IRF7 and thus contributes to the inhibition of type I interferon production. Cleaves host HNRNPA1 thereby increasing the translation of apoptosis protease activating factor APAF1, leading to apoptosis of the host cell. Cleaves host NLRP1, triggers host N-glycine-mediated degradation of the autoinhibitory NLRP1 N-terminal fragment. Its function is as follows. Replicates the viral genomic RNA on the surface of intracellular membranes. May form linear arrays of subunits that propagate along a strong head-to-tail interaction called interface-I. Covalently attaches UMP to a tyrosine of VPg, which is used to prime RNA synthesis. The positive stranded RNA genome is first replicated at virus induced membranous vesicles, creating a dsRNA genomic replication form. This dsRNA is then used as template to synthesize positive stranded RNA genomes. ss(+)RNA genomes are either translated, replicated or encapsidated. The sequence is that of Genome polyprotein from Human enterovirus 71 (strain 7423/MS/87) (EV71).